The sequence spans 92 residues: Antifungal protein B (92 aa).

The N-terminal stretch at 1–18 is a signal peptide; it reads MHITSIAIVFFAAMGAVA. A propeptide spanning residues 19-34 is cleaved from the precursor; the sequence is SPIATESDDLDARDVQ. 3 disulfides stabilise this stretch: Cys42/Cys70, Cys49/Cys77, and Cys62/Cys88.

It belongs to the antifungal protein pafB family.

It localises to the secreted. The protein resides in the host cytoplasm. Its function is as follows. Antifungal protein that acts as an inhibitor of growth of human pathogenic molds and yeasts. The chain is Antifungal protein B from Penicillium rubens (strain ATCC 28089 / DSM 1075 / NRRL 1951 / Wisconsin 54-1255) (Penicillium chrysogenum).